The following is a 419-amino-acid chain: S-adenosylmethionine synthase (419 aa).

His-15 is a binding site for ATP. Asp-17 is a Mg(2+) binding site. Glu-43 provides a ligand contact to K(+). Residues Glu-56 and Gln-100 each coordinate L-methionine. Residues 100 to 110 (QSPDIAQGVDE) are flexible loop. ATP contacts are provided by residues 171 to 173 (DGK), 248 to 249 (KF), Asp-257, 263 to 264 (RK), Ala-280, and Lys-284. Asp-257 contributes to the L-methionine binding site. Residue Lys-288 coordinates L-methionine.

Belongs to the AdoMet synthase family. Homotetramer; dimer of dimers. It depends on Mg(2+) as a cofactor. The cofactor is K(+).

It localises to the cytoplasm. The enzyme catalyses L-methionine + ATP + H2O = S-adenosyl-L-methionine + phosphate + diphosphate. It participates in amino-acid biosynthesis; S-adenosyl-L-methionine biosynthesis; S-adenosyl-L-methionine from L-methionine: step 1/1. In terms of biological role, catalyzes the formation of S-adenosylmethionine (AdoMet) from methionine and ATP. The overall synthetic reaction is composed of two sequential steps, AdoMet formation and the subsequent tripolyphosphate hydrolysis which occurs prior to release of AdoMet from the enzyme. The sequence is that of S-adenosylmethionine synthase from Synechococcus sp. (strain CC9311).